Here is a 962-residue protein sequence, read N- to C-terminus: Protocadherin gamma-A4 (962 aa).

Residues 1–24 (MHFILDPEDPGAPQASTEGKPKHR) are disordered. Residues 1–59 (MHFILDPEDPGAPQASTEGKPKHRRLRGGVVMAAPPARPDHTRLLQICLLLGVLVEIRA) form the signal peptide. Cadherin domains lie at 60–164 (EQIL…PPSF), 165–273 (GTEQ…APVF), 274–378 (TQPE…APEV), 379–483 (TVTS…PPTF), 484–598 (PHAS…YPTF), and 601–713 (DGST…KPSA). Topologically, residues 60-723 (EQILYSVFEE…DPDDSGLTLY (664 aa)) are extracellular. 2 N-linked (GlcNAc...) asparagine glycosylation sites follow: asparagine 450 and asparagine 576. The chain crosses the membrane as a helical span at residues 724-744 (LVVAVAAVSCVFLAFVTVLLA). The Cytoplasmic segment spans residues 745 to 962 (LKLRRWHKSR…KKKSGKKEKK (218 aa)). Disordered regions lie at residues 832 to 871 (KGDP…WPNN) and 932 to 962 (ATLT…KEKK). The span at 836-871 (NLQQAPPNTDWRFSQAQRPGTSGSQNGDDTGTWPNN) shows a compositional bias: polar residues. The segment covering 952 to 962 (NKKKSGKKEKK) has biased composition (basic residues).

Its subcellular location is the cell membrane. Functionally, potential calcium-dependent cell-adhesion protein. May be involved in the establishment and maintenance of specific neuronal connections in the brain. This is Protocadherin gamma-A4 (PCDHGA4) from Homo sapiens (Human).